The chain runs to 215 residues: MADS-box transcription factor 4 (215 aa).

The region spanning 1–61 (MGRGKIEIKR…GKLSDYCTPK (61 aa)) is the MADS-box domain. In terms of domain architecture, K-box spans 89-175 (HKSLSAEIDR…AFRVHQQEVE (87 aa)).

In terms of assembly, may interact with the K-box of MADS16. Highly expressed in lodicules, at intermediate levels in stamens, and weakly in carpels. Expressed in pollen.

The protein localises to the nucleus. Probable transcription factor involved in the development of floral organs. B-class protein required for normal development of lodicules and stamens (whorls 2 and 3). May function as a heterodimer with MADS16. The polypeptide is MADS-box transcription factor 4 (MADS4) (Oryza sativa subsp. japonica (Rice)).